We begin with the raw amino-acid sequence, 425 residues long: CinA-like protein (425 aa).

Belongs to the CinA family.

This Desulfovibrio desulfuricans (strain ATCC 27774 / DSM 6949 / MB) protein is CinA-like protein.